The primary structure comprises 424 residues: MLARKSIIPEEYVLARIAAENLRKPRIRDRLPKARFIAKSGACNLAHKNIREQGRFLQDIFTTLVDLKWRHTLVIFTMSFLCSWLLFAIMWWLVAFAHGDIYAYMEKSGMEKSGLESTVCVTNVRSFTSAFLFSIEVQVTIGFGGRMMTEECPLAITVLILQNIVGLIINAVMLGCIFMKTAQAHRRAETLIFSRHAVIAVRNGKLCFMFRVGDLRKSMIISASVRIQVVKKTTTPEGEVVPIHQLDIPVDNPIESNNIFLVAPLIICHVIDKRSPLYDISATDLANQDLEVIVILEGVVETTGITTQARTSYIAEEIQWGHRFVSIVTEEEGVYSVDYSKFGNTVKVAAPRCSARELDEKPSILIQTLQKSELSHQNSLRKRNSMRRNNSMRRNNSIRRNNSSLMVPKVQFMTPEGNQNTSES.

Residues 1–69 lie on the Cytoplasmic side of the membrane; sequence MLARKSIIPE…IFTTLVDLKW (69 aa). Ser-6 is modified (phosphoserine). The chain crosses the membrane as a helical span at residues 70-94; the sequence is RHTLVIFTMSFLCSWLLFAIMWWLV. Residues 95–126 lie on the Extracellular side of the membrane; sequence AFAHGDIYAYMEKSGMEKSGLESTVCVTNVRS. Residues 127–138 constitute an intramembrane region (helical; Pore-forming); the sequence is FTSAFLFSIEVQ. An intramembrane region (pore-forming) is located at residues 139–145; the sequence is VTIGFGG. A Selectivity filter motif is present at residues 140–145; that stretch reads TIGFGG. Topologically, residues 146 to 154 are extracellular; sequence RMMTEECPL. The chain crosses the membrane as a helical span at residues 155–176; it reads AITVLILQNIVGLIINAVMLGC. The Cytoplasmic segment spans residues 177-424; sequence IFMKTAQAHR…PEGNQNTSES (248 aa). The tract at residues 375 to 424 is disordered; it reads SHQNSLRKRNSMRRNNSMRRNNSIRRNNSSLMVPKVQFMTPEGNQNTSES. Low complexity predominate over residues 387 to 404; it reads RRNNSMRRNNSIRRNNSS.

The protein belongs to the inward rectifier-type potassium channel (TC 1.A.2.1) family. KCNJ8 subfamily. In terms of assembly, interacts with ABCC9. In terms of tissue distribution, predominantly detected in fetal and adult heart.

The protein localises to the membrane. The enzyme catalyses K(+)(in) = K(+)(out). In terms of biological role, inward rectifier potassium channels are characterized by a greater tendency to allow potassium to flow into the cell rather than out of it. Their voltage dependence is regulated by the concentration of extracellular potassium; as external potassium is raised, the voltage range of the channel opening shifts to more positive voltages. The inward rectification is mainly due to the blockage of outward current by internal magnesium. This channel is activated by internal ATP and can be blocked by external barium. Can form a sulfonylurea-sensitive but ATP-insensitive potassium channel with ABCC9. This chain is ATP-sensitive inward rectifier potassium channel 8 (KCNJ8), found in Homo sapiens (Human).